Reading from the N-terminus, the 602-residue chain is Zinc finger MYND domain-containing protein 11 (602 aa).

Residues 6 to 82 (KRRQADTKAI…CKGSKAGIEQ (77 aa)) form the SAMD1-like winged helix (WH) domain. Residues 100 to 148 (DWYCFECHLPGEVLICDLCFRVYHSKCLSDEFRLRDSSSPWQCPVCRSI) form a PHD-type zinc finger. In terms of domain architecture, Bromo spans 149–255 (KKKNTNKQEM…KDTCHELDEL (107 aa)). Zn(2+) contacts are provided by cysteine 258, cysteine 261, cysteine 277, and histidine 281. In terms of domain architecture, PWWP spans 280–331 (NHELVWAKMKGFGFWPAKVMQKEDNQVDVRFFGHHHQRAWIPSENIQDITVN). Lysine 366 is covalently cross-linked (Glycyl lysine isopeptide (Lys-Gly) (interchain with G-Cter in SUMO2)). Positions 366–459 (KNEDRGEEEA…MLHRSTQTTN (94 aa)) are disordered. The Nuclear localization signal signature appears at 394-400 (RAKKGRR). Residues lysine 407 and lysine 408 each participate in a glycyl lysine isopeptide (Lys-Gly) (interchain with G-Cter in SUMO2) cross-link. Serine 421 carries the phosphoserine modification. Polar residues predominate over residues 435–459 (SVSTQTKKLSASSPRMLHRSTQTTN). The segment at 452-572 (HRSTQTTNDG…CYNCEEEAMY (121 aa)) is interaction with human adenovirus E1A. Residues cysteine 563, cysteine 566, cysteine 574, cysteine 575, cysteine 581, cysteine 585, histidine 594, and cysteine 598 each contribute to the Zn(2+) site. The MYND-type zinc finger occupies 563 to 598 (CYNCEEEAMYHCCWNTSYCSIKCQQEHWHAEHKRTC).

Homooligomer; forms homooligomers via its C-terminus. Interacts with histone H3.3 trimethylated at 'Lys-36' (H3.3K36me3). Interacts (via MYND-type zinc finger) with NCOR1. Interacts (via MYND-type zinc finger) with MGA protein (via PXLXP motif). Interacts (via MYND-type zinc finger) with EZH2. Interacts with EMSY and E2F6. Interacts with PIAS1 and UBE2I. As to quaternary structure, (Microbial infection) Interacts (via MYND-type zinc finger) with human adenovirus early E1A protein (via PXLXP motif); this interaction inhibits E1A mediated transactivation. In terms of assembly, (Microbial infection) Interacts (via MYND-type zinc finger) with Epstein-Barr virus EBNA2 protein (via PXLXP motif). Interacts with Epstein-Barr virus-derived protein LMP1; leading to negatively regulate NF-kappa-B activation by Epstein-Barr virus-derived protein LMP1. In terms of processing, sumoylated following its interaction with PIAS1 and UBE2I. Ubiquitinated, leading to proteasomal degradation. As to expression, ubiquitous.

Its subcellular location is the nucleus. The protein resides in the chromosome. In terms of biological role, chromatin reader that specifically recognizes and binds histone H3.3 trimethylated at 'Lys-36' (H3.3K36me3) and regulates RNA polymerase II elongation. Does not bind other histone H3 subtypes (H3.1 or H3.2). Colocalizes with highly expressed genes and functions as a transcription corepressor by modulating RNA polymerase II at the elongation stage. Binds non-specifically to dsDNA. Acts as a tumor-suppressor by repressing a transcriptional program essential for tumor cell growth. Functionally, (Microbial infection) Inhibits Epstein-Barr virus EBNA2-mediated transcriptional activation and host cell proliferation, through direct interaction. This Homo sapiens (Human) protein is Zinc finger MYND domain-containing protein 11.